The sequence spans 641 residues: Mannosyl-oligosaccharide 1,2-alpha-mannosidase IB (641 aa).

The residue at position 2 (Thr2) is an N-acetylthreonine. Topologically, residues 2–36 (TTPALLPLSGRRIPPLNLGPPSFPHHRATLRLSEK) are cytoplasmic. Residues 37–57 (FILLLILSAFITLCFGAFFFL) traverse the membrane as a helical; Signal-anchor for type II membrane protein segment. Over 58–641 (PDSSKHKRFD…STLSGNPAVR (584 aa)) the chain is Lumenal. The cysteines at positions 462 and 494 are disulfide-linked. Glu508 serves as the catalytic Proton donor. Thr619 provides a ligand contact to Ca(2+). The N-linked (GlcNAc...) asparagine glycan is linked to Asn631.

Belongs to the glycosyl hydrolase 47 family. Ca(2+) is required as a cofactor.

The protein resides in the golgi apparatus membrane. The catalysed reaction is N(4)-(alpha-D-Man-(1-&gt;2)-alpha-D-Man-(1-&gt;2)-alpha-D-Man-(1-&gt;3)-[alpha-D-Man-(1-&gt;2)-alpha-D-Man-(1-&gt;3)-[alpha-D-Man-(1-&gt;2)-alpha-D-Man-(1-&gt;6)]-alpha-D-Man-(1-&gt;6)]-beta-D-Man-(1-&gt;4)-beta-D-GlcNAc-(1-&gt;4)-beta-D-GlcNAc)-L-asparaginyl-[protein] (N-glucan mannose isomer 9A1,2,3B1,2,3) + 4 H2O = N(4)-(alpha-D-Man-(1-&gt;3)-[alpha-D-Man-(1-&gt;3)-[alpha-D-Man-(1-&gt;6)]-alpha-D-Man-(1-&gt;6)]-beta-D-Man-(1-&gt;4)-beta-D-GlcNAc-(1-&gt;4)-beta-D-GlcNAc)-L-asparaginyl-[protein] (N-glucan mannose isomer 5A1,2) + 4 beta-D-mannose. The enzyme catalyses N(4)-(alpha-D-Man-(1-&gt;2)-alpha-D-Man-(1-&gt;2)-alpha-D-Man-(1-&gt;3)-[alpha-D-Man-(1-&gt;3)-[alpha-D-Man-(1-&gt;2)-alpha-D-Man-(1-&gt;6)]-alpha-D-Man-(1-&gt;6)]-beta-D-Man-(1-&gt;4)-beta-D-GlcNAc-(1-&gt;4)-beta-D-GlcNAc)-L-asparaginyl-[protein] (N-glucan mannose isomer 8A1,2,3B1,3) + 3 H2O = N(4)-(alpha-D-Man-(1-&gt;3)-[alpha-D-Man-(1-&gt;3)-[alpha-D-Man-(1-&gt;6)]-alpha-D-Man-(1-&gt;6)]-beta-D-Man-(1-&gt;4)-beta-D-GlcNAc-(1-&gt;4)-beta-D-GlcNAc)-L-asparaginyl-[protein] (N-glucan mannose isomer 5A1,2) + 3 beta-D-mannose. It functions in the pathway protein modification; protein glycosylation. With respect to regulation, inhibited by both 1-deoxymannojirimycin and kifunensine. Its function is as follows. Involved in the maturation of Asn-linked oligosaccharides. Progressively trim alpha-1,2-linked mannose residues from Man(9)GlcNAc(2) to produce Man(5)GlcNAc(2). This is Mannosyl-oligosaccharide 1,2-alpha-mannosidase IB (Man1a2) from Mus musculus (Mouse).